The chain runs to 151 residues: UPF0178 protein Shal_3046 (151 aa).

The protein belongs to the UPF0178 family.

The protein is UPF0178 protein Shal_3046 of Shewanella halifaxensis (strain HAW-EB4).